We begin with the raw amino-acid sequence, 248 residues long: uncharacterized protein (248 aa).

The N-terminal stretch at 1-23 (MLKKIVIGVTATAAFGIGAGALA) is a signal peptide.

Its subcellular location is the cell outer membrane. This is an uncharacterized protein from Coxiella burnetii (strain RSA 493 / Nine Mile phase I).